The primary structure comprises 412 residues: Tyrosine--tRNA ligase (412 aa).

Tyr-31 contacts L-tyrosine. Positions 36–45 match the 'HIGH' region motif; that stretch reads PTAPSLHIGH. The L-tyrosine site is built by Tyr-162 and Gln-166. A 'KMSKS' region motif is present at residues 222 to 226; the sequence is KIGKT. Lys-225 serves as a coordination point for ATP. An S4 RNA-binding domain is found at 345–411; it reads KRWLDIVVEL…GKRKKQVIDL (67 aa).

It belongs to the class-I aminoacyl-tRNA synthetase family. TyrS type 1 subfamily. In terms of assembly, homodimer.

It localises to the cytoplasm. It carries out the reaction tRNA(Tyr) + L-tyrosine + ATP = L-tyrosyl-tRNA(Tyr) + AMP + diphosphate + H(+). Catalyzes the attachment of tyrosine to tRNA(Tyr) in a two-step reaction: tyrosine is first activated by ATP to form Tyr-AMP and then transferred to the acceptor end of tRNA(Tyr). This is Tyrosine--tRNA ligase from Chlamydia trachomatis serovar A (strain ATCC VR-571B / DSM 19440 / HAR-13).